The following is an 884-amino-acid chain: Cytosolic carboxypeptidase-like protein 5 (884 aa).

The region spanning 157–570 (YPFSYSDCQD…AMAIAALDMA (414 aa)) is the Peptidase M14 domain. Zn(2+) contacts are provided by H252 and E255. Disordered stretches follow at residues 343–364 (HPQS…PLSD) and 376–401 (HLGH…KASG). H434 lines the Zn(2+) pocket. The active-site Proton donor/acceptor is the E516. Disordered regions lie at residues 603 to 737 (LSST…HSTG) and 784 to 859 (QVRP…RICY). Polar residues predominate over residues 620–635 (PPRSNSGLPVSCSENP). Composition is skewed to low complexity over residues 641–666 (SFST…NSPS) and 714–737 (PTSS…HSTG). At S839 the chain carries Phosphoserine. Residues 846–857 (ISCSLSDSQSRI) show a composition bias toward polar residues.

This sequence belongs to the peptidase M14 family. Requires Zn(2+) as cofactor.

The protein resides in the cytoplasm. The protein localises to the cytosol. Its subcellular location is the nucleus. It is found in the cytoskeleton. It localises to the spindle. The protein resides in the midbody. The enzyme catalyses gamma-L-glutamyl-L-glutamyl-[protein] + H2O = L-glutamyl-[protein] + L-glutamate. It carries out the reaction (L-glutamyl)(n+1)-gamma-L-glutamyl-L-glutamyl-[protein] + H2O = (L-glutamyl)(n)-gamma-L-glutamyl-L-glutamyl-[protein] + L-glutamate. The catalysed reaction is C-terminal L-alpha-aminoacyl-L-glutamyl-[tubulin] + H2O = C-terminal L-alpha-aminoacyl-[tubulin] + L-glutamate. It catalyses the reaction C-terminal L-alpha-aminoacyl-L-glutamyl-L-glutamyl-[tubulin] + H2O = C-terminal L-alpha-aminoacyl-L-glutamyl-[tubulin] + L-glutamate. In terms of biological role, metallocarboxypeptidase that mediates deglutamylation of tubulin and non-tubulin target proteins. Catalyzes the removal of polyglutamate side chains present on the gamma-carboxyl group of glutamate residues within the C-terminal tail of alpha- and beta-tubulin. Cleaves alpha- and gamma-linked polyglutamate tubulin side-chain, as well as the branching point glutamate. Also catalyzes the removal of alpha-linked glutamate residues from the carboxy-terminus of alpha-tubulin. Mediates deglutamylation of nucleotidyltransferase CGAS, leading to CGAS antiviral defense response activation. The polypeptide is Cytosolic carboxypeptidase-like protein 5 (AGBL5) (Ailuropoda melanoleuca (Giant panda)).